The sequence spans 1397 residues: Ankyrin repeat domain-containing protein 30A (1397 aa).

6 ANK repeats span residues 72-101 (QKRTALHWACVNGHEEVVTFLVDRKCQLDV), 105-134 (EHRTPLMKALQCHQEACANILIDSGADINL), 138-167 (YGNTALHYAVYSEILSVVAKLLSHGAVIEV), 171-200 (ASLTPLLLSITKRSEQIVEFLLIKNANANA), 204-233 (YKCTALMLAVCHGSSEIVGMLLQQNVDVFA), and 237-271 (CGVTAEHYAVTCGFHHIHEQIMEYIRKLSKNHQNT). Residues 267-279 (NHQNTNPEGTSAG) show a composition bias toward polar residues. Disordered regions lie at residues 267-376 (NHQN…TWPA), 453-482 (PTKESSTKASANDQRFPSESKQEEDEEYSC), 782-807 (QTLRADEILPSESKQKDYEESSWDSE), and 902-931 (TLRADQMFPSESKQKKVEENSWDSESLRET). Basic and acidic residues-rich tracts occupy residues 290–304 (RTPDTAESLVEKTPD) and 312–326 (RTPDTAESLVEKTPD). Residues 455–467 (KESSTKASANDQR) are compositionally biased toward polar residues. Basic and acidic residues-rich tracts occupy residues 782–800 (QTLRADEILPSESKQKDYE) and 913–931 (SKQKKVEENSWDSESLRET). Coiled-coil stretches lie at residues 998 to 1188 (VLKK…KQDK) and 1282 to 1327 (EHAQ…FQLQ).

In terms of tissue distribution, mainly expressed in breast and testis. A very faint signal is detected in placenta. Also expressed in many breast cancer cells.

The chain is Ankyrin repeat domain-containing protein 30A (ANKRD30A) from Homo sapiens (Human).